Here is a 336-residue protein sequence, read N- to C-terminus: NmrA-like family domain-containing oxidoreductase malD (336 aa).

Residues 12 to 17, 40 to 44, 61 to 62, 82 to 84, K140, and 163 to 166 contribute to the NADP(+) site; these read GGTGNQ, RDPTS, DG, TNS, and FMEA.

It belongs to the NmrA-type oxidoreductase family.

Its function is as follows. NmrA-like family domain-containing oxidoreductase; part of the gene cluster that mediates the biosynthesis of malbrancheamide, a dichlorinated fungal indole alkaloid that belongs to a family of natural products containing a characteristic bicyclo[2.2.2]diazaoctane core. The first step of malbrancheamide biosynthesis involves coupling of L-proline and L-tryptophan by malG, a bimodular NRPS, to produce L-Pro-L-Trp aldehyde through reductive offloading. This compound undergoes spontaneous cyclization and dehydration to give a dienamine which is reverse prenylated at C-2 by malE. The other prenyltransferase present in the cluster, malB, displays modest activity, suggesting that may be a redundant gene in the pathway. Subsequently, a [4+2] Diels-Alder cyclo-addition catalyzed by the bifunctional enzyme malC forms the characteristic bicyclo[2.2.2]diazaoctane ring of premalbrancheamid. Finally, the flavin-dependent halogenase malA catalyzes the iterative dichlorination of the indole ring of premalbrancheamide to yield C-9 monochlorinated malbrancheamide B, C-8 monochlorinated isomalbrancheamide B, and dichlorinated malbrancheamide. MalA is also able to brominate premalbrancheamide at C-9 to yield malbrancheamide C, and, to a lesser extend, at C-8 to yield isomalbrancheamide C. Finally, malA can brominate C-9 monochlorinated malbrancheamide B at C-8 to yield malbrancheamide D, or C-8 monochlorinated isomalbrancheamide B at C-9 to produce isomalbrancheamide D. The sequence is that of NmrA-like family domain-containing oxidoreductase malD from Malbranchea aurantiaca.